Consider the following 574-residue polypeptide: MWPQPRFPPHPAMSEKTQQGKLAAAKKKLKAYWQRKSPGIPAGANRKKKINGSSPDTATSGGYHSPGDSATGIYGEGRASSTTLEDLESQYQELAVALDSSSAIISQLTENINSLVRTSKEEKKHEIHLVQKLGRSLFKLKNQTAEPLAPEPPAGPSKVEQLQDETNHLRKELESVGRQLQAEVENNQMLSLLNRRQEERLREQEERLREQEERLREQEDRLHEQEERLREQEERLCEQEERLREHEERLCEQEERLCEQEERLREQEERLHEQEERLREQEERLCEQEERLREQEERLCEQEERLREQEERLCEQEKLPGQERLLEEVEKLLEQERRQEEQERLLERERLLEEVEKLLEQERQQEEQERLLERERLLEEVEKLLEQERRQEEQERLLERERLLDEVEELLDEVEELLEQERLRQQDERLWQQETLQELERLRELERLRELERMLELGWEALYEQRAEPRSGFEELNNENKSTLQLEQQVKELKKSGGAEEPRGSESAAAARPVAGAPVPQGAWMCGQAGWTPQEHPGLSGEAVGTGEAAGGAGEAACHSFRAAENRELNITII.

The span at 1 to 11 (MWPQPRFPPHP) shows a compositional bias: pro residues. Disordered regions lie at residues 1–77 (MWPQ…YGEG) and 491–552 (KELK…AAGG). Polar residues predominate over residues 51–62 (NGSSPDTATSGG). Positions 157 to 496 (SKVEQLQDET…EQQVKELKKS (340 aa)) form a coiled coil. The span at 491–504 (KELKKSGGAEEPRG) shows a compositional bias: basic and acidic residues. Low complexity predominate over residues 508 to 523 (AAAARPVAGAPVPQGA).

It belongs to the GOLGA6 family.

This Homo sapiens (Human) protein is Golgin subfamily A member 6-like protein 4 (GOLGA6L4).